A 422-amino-acid polypeptide reads, in one-letter code: Histidine--tRNA ligase (422 aa).

This sequence belongs to the class-II aminoacyl-tRNA synthetase family. Homodimer.

It localises to the cytoplasm. The catalysed reaction is tRNA(His) + L-histidine + ATP = L-histidyl-tRNA(His) + AMP + diphosphate + H(+). This chain is Histidine--tRNA ligase, found in Prosthecochloris aestuarii (strain DSM 271 / SK 413).